The primary structure comprises 245 residues: Uridylate kinase (245 aa).

Position 12-15 (12-15 (KLSG)) interacts with ATP. The segment at 20–25 (GEKGVG) is involved in allosteric activation by GTP. G54 serves as a coordination point for UMP. ATP is bound by residues G55 and R59. UMP is bound by residues D74 and 135–142 (IGSPYFST). Positions 163, 169, and 172 each coordinate ATP.

The protein belongs to the UMP kinase family. Homohexamer.

The protein localises to the cytoplasm. The enzyme catalyses UMP + ATP = UDP + ADP. Its pathway is pyrimidine metabolism; CTP biosynthesis via de novo pathway; UDP from UMP (UMPK route): step 1/1. Its activity is regulated as follows. Allosterically activated by GTP. Inhibited by UTP. Functionally, catalyzes the reversible phosphorylation of UMP to UDP. The chain is Uridylate kinase from Streptococcus thermophilus (strain ATCC BAA-250 / LMG 18311).